The sequence spans 362 residues: Notoamide biosynthesis cluster protein J' (362 aa).

The first 22 residues, Met1–Thr22, serve as a signal peptide directing secretion. Asn157, Asn190, Asn280, and Asn338 each carry an N-linked (GlcNAc...) asparagine glycan.

Part of the gene cluster that mediates the biosynthesis of notoamide, a fungal indole alkaloid that belongs to a family of natural products containing a characteristic bicyclo[2.2.2]diazaoctane core. The first step of notoamide biosynthesis involves coupling of L-proline and L-tryptophan by the bimodular NRPS notE', to produce cyclo-L-tryptophan-L-proline called brevianamide F. The reverse prenyltransferase notF' then acts as a deoxybrevianamide E synthase and converts brevianamide F to deoxybrevianamide E via reverse prenylation at C-2 of the indole ring leading to the bicyclo[2.2.2]diazaoctane core. Deoxybrevianamide E is further hydroxylated at C-6 of the indole ring, likely catalyzed by the cytochrome P450 monooxygenase notG', to yield 6-hydroxy-deoxybrevianamide E. 6-hydroxy-deoxybrevianamide E is a specific substrate of the prenyltransferase notC' for normal prenylation at C-7 to produce 6-hydroxy-7-prenyl-deoxybrevianamide, also called notoamide S. As the proposed pivotal branching point in notoamide biosynthesis, notoamide S can be diverted to notoamide E through an oxidative pyran ring closure putatively catalyzed by either notH' cytochrome P450 monooxygenase or the notD' FAD-linked oxidoreductase. This step would be followed by an indole 2,3-epoxidation-initiated pinacol-like rearrangement catalyzed by the notB' FAD-dependent monooxygenase leading to the formation of notoamide C and notoamide D. On the other hand notoamide S is converted to notoamide T by notH' (or notD'), a bifunctional oxidase that also functions as the intramolecular Diels-Alderase responsible for generation of (-)-notoamide T. To generate antipodal (+)-notoaminide T, notH (or notD) in Aspergillus strain MF297-2 is expected to catalyze a Diels-Alder reaction leading to the opposite stereochemistry. The remaining oxidoreductase notD' (or notH') likely catalyzes the oxidative pyran ring formation to yield (-)-stephacidin A. The FAD-dependent monooxygenase notI' is highly similar to notB' and is predicted to catalyze a similar conversion from (-)-stephacidin A to (+)-notoamide B via the 2,3-epoxidation of (-)-stephacidin A followed by a pinacol-type rearrangement. Finally, it remains unclear which enzyme could be responsible for the final hydroxylation steps leading to notoamide A and sclerotiamide. The function of notJ' in the notoamide biosynthesis has not been determined yet. The chain is Notoamide biosynthesis cluster protein J' from Aspergillus versicolor.